A 214-amino-acid polypeptide reads, in one-letter code: Pyridoxine/pyridoxamine 5'-phosphate oxidase (214 aa).

Substrate-binding positions include 9 to 12 (RKDY) and K67. Residues 62 to 67 (RMVLLK), 77 to 78 (FT), R83, K84, and Q106 contribute to the FMN site. Positions 124, 128, and 132 each coordinate substrate. FMN contacts are provided by residues 141–142 (QS) and W186. 192 to 194 (RLH) provides a ligand contact to substrate. Position 196 (R196) interacts with FMN.

Belongs to the pyridoxamine 5'-phosphate oxidase family. As to quaternary structure, homodimer. FMN is required as a cofactor.

It catalyses the reaction pyridoxamine 5'-phosphate + O2 + H2O = pyridoxal 5'-phosphate + H2O2 + NH4(+). The enzyme catalyses pyridoxine 5'-phosphate + O2 = pyridoxal 5'-phosphate + H2O2. It participates in cofactor metabolism; pyridoxal 5'-phosphate salvage; pyridoxal 5'-phosphate from pyridoxamine 5'-phosphate: step 1/1. The protein operates within cofactor metabolism; pyridoxal 5'-phosphate salvage; pyridoxal 5'-phosphate from pyridoxine 5'-phosphate: step 1/1. Its function is as follows. Catalyzes the oxidation of either pyridoxine 5'-phosphate (PNP) or pyridoxamine 5'-phosphate (PMP) into pyridoxal 5'-phosphate (PLP). This is Pyridoxine/pyridoxamine 5'-phosphate oxidase from Nostoc punctiforme (strain ATCC 29133 / PCC 73102).